Consider the following 596-residue polypeptide: Elongation factor 4 (596 aa).

Residues 2-184 (KQIRNFSIIA…VIVAKIPPPE (183 aa)) enclose the tr-type G domain. GTP-binding positions include 14–19 (DHGKST) and 131–134 (NKID).

The protein belongs to the TRAFAC class translation factor GTPase superfamily. Classic translation factor GTPase family. LepA subfamily.

It is found in the cell inner membrane. It catalyses the reaction GTP + H2O = GDP + phosphate + H(+). Functionally, required for accurate and efficient protein synthesis under certain stress conditions. May act as a fidelity factor of the translation reaction, by catalyzing a one-codon backward translocation of tRNAs on improperly translocated ribosomes. Back-translocation proceeds from a post-translocation (POST) complex to a pre-translocation (PRE) complex, thus giving elongation factor G a second chance to translocate the tRNAs correctly. Binds to ribosomes in a GTP-dependent manner. The sequence is that of Elongation factor 4 from Shewanella baltica (strain OS223).